A 477-amino-acid polypeptide reads, in one-letter code: Glutamate--tRNA ligase (477 aa).

The 'HIGH' region signature appears at 8–18 (PSPTGTLHIGT). Residues 247–251 (KLSKR) carry the 'KMSKS' region motif. Lys-250 contributes to the ATP binding site.

The protein belongs to the class-I aminoacyl-tRNA synthetase family. Glutamate--tRNA ligase type 1 subfamily. Monomer.

The protein resides in the cytoplasm. The catalysed reaction is tRNA(Glu) + L-glutamate + ATP = L-glutamyl-tRNA(Glu) + AMP + diphosphate. Its function is as follows. Catalyzes the attachment of glutamate to tRNA(Glu) in a two-step reaction: glutamate is first activated by ATP to form Glu-AMP and then transferred to the acceptor end of tRNA(Glu). The chain is Glutamate--tRNA ligase from Synechococcus sp. (strain CC9902).